Consider the following 232-residue polypeptide: MIIIEKIKRGLIVSCQALENEPLHSSFIMSKMALAAKMGGAIGIRANGVNDISQIKLEVDLPIIGIIKRNYNNCDVFITPTMKEIDELCNEGVDIIALDATFRNRPDGVLLDDFFESIKKKYPKQCLMADISSLDEAINADKLGFDFIGTTLYGYTKSTNGLDIADNDFNFLKALINSNFKSTLIVEGKIDTPLKAQKCFEMGVDLVVVGGAITRPVEITKKFVEKINQVKR.

It belongs to the NanE family.

The enzyme catalyses an N-acyl-D-glucosamine 6-phosphate = an N-acyl-D-mannosamine 6-phosphate. Its pathway is amino-sugar metabolism; N-acetylneuraminate degradation; D-fructose 6-phosphate from N-acetylneuraminate: step 3/5. Its function is as follows. Converts N-acetylmannosamine-6-phosphate (ManNAc-6-P) to N-acetylglucosamine-6-phosphate (GlcNAc-6-P). The sequence is that of Putative N-acetylmannosamine-6-phosphate 2-epimerase from Borrelia garinii subsp. bavariensis (strain ATCC BAA-2496 / DSM 23469 / PBi) (Borreliella bavariensis).